Consider the following 526-residue polypeptide: Putative UDP-glucuronosyltransferase ugt-48 (526 aa).

Residues 1 to 17 (MLLRILTFLAVCQVTTS) form the signal peptide. N-linked (GlcNAc...) asparagine glycans are attached at residues Asn58 and Asn305. A helical transmembrane segment spans residues 489–509 (FYNLDIIITAASIPVLIFIVL). N-linked (GlcNAc...) asparagine glycosylation occurs at Asn513.

This sequence belongs to the UDP-glycosyltransferase family. Interacts with cmd-1 in the presence of Ca(2+).

The protein resides in the membrane. It carries out the reaction glucuronate acceptor + UDP-alpha-D-glucuronate = acceptor beta-D-glucuronoside + UDP + H(+). This Caenorhabditis elegans protein is Putative UDP-glucuronosyltransferase ugt-48 (ugt-48).